A 119-amino-acid polypeptide reads, in one-letter code: Small ribosomal subunit protein uS13m (119 aa).

This sequence belongs to the universal ribosomal protein uS13 family. In terms of assembly, part of the small ribosomal subunit.

The protein localises to the mitochondrion. Functionally, located at the top of the head of the small subunit, it contacts several helices of the small subunit rRNA. The chain is Small ribosomal subunit protein uS13m (RPS13) from Acanthamoeba castellanii (Amoeba).